A 565-amino-acid chain; its full sequence is 2-isopropylmalate synthase (565 aa).

The 276-residue stretch at 37 to 312 folds into the Pyruvate carboxyltransferase domain; that stretch reads PRWCSVDLRD…DPMIDLSDID (276 aa). Residues aspartate 46, histidine 251, histidine 253, and asparagine 287 each coordinate Mg(2+). The segment at 446–565 is regulatory domain; it reads EGGDPAASLE…SAVNRASRES (120 aa).

This sequence belongs to the alpha-IPM synthase/homocitrate synthase family. LeuA type 2 subfamily. As to quaternary structure, homodimer. Requires Mg(2+) as cofactor.

It is found in the cytoplasm. The catalysed reaction is 3-methyl-2-oxobutanoate + acetyl-CoA + H2O = (2S)-2-isopropylmalate + CoA + H(+). It functions in the pathway amino-acid biosynthesis; L-leucine biosynthesis; L-leucine from 3-methyl-2-oxobutanoate: step 1/4. Functionally, catalyzes the condensation of the acetyl group of acetyl-CoA with 3-methyl-2-oxobutanoate (2-ketoisovalerate) to form 3-carboxy-3-hydroxy-4-methylpentanoate (2-isopropylmalate). The polypeptide is 2-isopropylmalate synthase (Parafrankia sp. (strain EAN1pec)).